We begin with the raw amino-acid sequence, 731 residues long: 1,4-alpha-glucan branching enzyme GlgB (731 aa).

Asp412 (nucleophile) is an active-site residue. Catalysis depends on Glu465, which acts as the Proton donor.

This sequence belongs to the glycosyl hydrolase 13 family. GlgB subfamily. In terms of assembly, monomer.

It catalyses the reaction Transfers a segment of a (1-&gt;4)-alpha-D-glucan chain to a primary hydroxy group in a similar glucan chain.. Its pathway is glycan biosynthesis; glycogen biosynthesis. In terms of biological role, catalyzes the formation of the alpha-1,6-glucosidic linkages in glycogen by scission of a 1,4-alpha-linked oligosaccharide from growing alpha-1,4-glucan chains and the subsequent attachment of the oligosaccharide to the alpha-1,6 position. This Bordetella pertussis (strain Tohama I / ATCC BAA-589 / NCTC 13251) protein is 1,4-alpha-glucan branching enzyme GlgB.